The primary structure comprises 302 residues: G-protein coupled receptor A5 (302 aa).

Over Met-1–Leu-20 the chain is Extracellular. Residues Ile-21–Phe-41 traverse the membrane as a helical segment. The Cytoplasmic segment spans residues Ala-42–Arg-50. Residues Ile-51–Leu-71 traverse the membrane as a helical segment. The Extracellular portion of the chain corresponds to Gln-72–Cys-81. A helical transmembrane segment spans residues Val-82–Ile-102. At Met-103 to His-122 the chain is on the cytoplasmic side. The chain crosses the membrane as a helical span at residues Ile-123–Leu-143. Residues His-144–Gln-173 are Extracellular-facing. Residues Leu-174 to Leu-194 form a helical membrane-spanning segment. Over Thr-195 to Tyr-208 the chain is Cytoplasmic. Residues Val-209 to Ala-229 form a helical membrane-spanning segment. Residues Cys-230 to Ser-249 lie on the Extracellular side of the membrane. A helical membrane pass occupies residues Thr-250–Phe-270. The Cytoplasmic portion of the chain corresponds to Ser-271–Val-302.

Belongs to the G-protein coupled receptor 1 family.

Its subcellular location is the host cell membrane. It is found in the host endoplasmic reticulum membrane. Acts as a viral G-protein coupled receptor that constitutively activates host alphai-type G-proteins, thereby inhibiting host forskolin-triggered CREB activation. This Connochaetes taurinus (Blue wildebeest) protein is G-protein coupled receptor A5 (A5).